Consider the following 507-residue polypeptide: Transposase for insertion sequences IS1326/IS1353 (507 aa).

An HTH IS21-type domain is found at 6–68 (ILSAIRRWHF…PFEPKLRQWL (63 aa)). The H-T-H motif DNA-binding region spans 19–40 (ASIREIARRSGLSRNTVRKYLQ). Residues 122 to 302 (GCFIPLRFAC…TVQEAFADEQ (181 aa)) enclose the Integrase catalytic domain.

The protein belongs to the transposase IS21/IS408/IS1162 family.

Its function is as follows. Required for the transposition of the insertion element. This Pseudomonas aeruginosa protein is Transposase for insertion sequences IS1326/IS1353 (istA).